The following is a 578-amino-acid chain: Phosphatase DCR2 (578 aa).

116–123 contacts ATP; that stretch reads GRRWFGKS.

Its subcellular location is the cytoplasm. In terms of biological role, required for cell cycle progression. Has a role in the completion of START. This is Phosphatase DCR2 (DCR2) from Saccharomyces cerevisiae (strain ATCC 204508 / S288c) (Baker's yeast).